A 176-amino-acid chain; its full sequence is Large ribosomal subunit protein uL10 (176 aa).

Belongs to the universal ribosomal protein uL10 family. Part of the ribosomal stalk of the 50S ribosomal subunit. The N-terminus interacts with L11 and the large rRNA to form the base of the stalk. The C-terminus forms an elongated spine to which L12 dimers bind in a sequential fashion forming a multimeric L10(L12)X complex.

Its function is as follows. Forms part of the ribosomal stalk, playing a central role in the interaction of the ribosome with GTP-bound translation factors. This is Large ribosomal subunit protein uL10 from Hahella chejuensis (strain KCTC 2396).